The chain runs to 347 residues: NADH-ubiquinone oxidoreductase chain 2 (347 aa).

A run of 11 helical transmembrane segments spans residues 1-21, 25-45, 55-75, 96-116, 123-143, 145-165, 178-198, 199-219, 237-257, 274-294, and 324-344; these read MNPL…LITA, HWFL…PVLT, AAIK…MAIL, LMIL…FWVP, TLTS…SIMY, IFPV…IMVG, ILAY…PYNP, NITI…FLAL, LTWL…LPPL, GTLI…YFYM, and LLLP…PLTF.

It belongs to the complex I subunit 2 family. Core subunit of respiratory chain NADH dehydrogenase (Complex I) which is composed of 45 different subunits. Interacts with TMEM242.

The protein localises to the mitochondrion inner membrane. It catalyses the reaction a ubiquinone + NADH + 5 H(+)(in) = a ubiquinol + NAD(+) + 4 H(+)(out). Core subunit of the mitochondrial membrane respiratory chain NADH dehydrogenase (Complex I) which catalyzes electron transfer from NADH through the respiratory chain, using ubiquinone as an electron acceptor. Essential for the catalytic activity and assembly of complex I. The chain is NADH-ubiquinone oxidoreductase chain 2 from Symphalangus syndactylus (Siamang).